Consider the following 459-residue polypeptide: Glycosyl hydrolase family 109 protein (459 aa).

The tat-type signal signal peptide spans 1-45 (MAGDESRSNPFSRRTLLRTSAAAGAGLGVAGLSTGYGAAQPVRPA). Residues 70–71 (NR), Asp92, 141–144 (WEWH), 161–162 (EC), and Asn190 each bind NAD(+). Substrate contacts are provided by residues Tyr219, Arg238, 250–253 (YPTH), and Tyr332. An NAD(+)-binding site is contributed by Tyr250. A disordered region spans residues 440-459 (DFTRGRWQTPHPGVDSPKPA).

This sequence belongs to the Gfo/Idh/MocA family. Glycosyl hydrolase 109 subfamily. It depends on NAD(+) as a cofactor. Post-translationally, predicted to be exported by the Tat system. The position of the signal peptide cleavage has not been experimentally proven.

Its function is as follows. Glycosidase. In Saccharopolyspora erythraea (strain ATCC 11635 / DSM 40517 / JCM 4748 / NBRC 13426 / NCIMB 8594 / NRRL 2338), this protein is Glycosyl hydrolase family 109 protein.